Consider the following 269-residue polypeptide: 1-(5-phosphoribosyl)-5-[(5-phosphoribosylamino)methylideneamino] imidazole-4-carboxamide isomerase (269 aa).

The active-site Proton acceptor is Asp-10. Residue Asp-132 is the Proton donor of the active site.

It belongs to the HisA/HisF family.

It localises to the cytoplasm. It carries out the reaction 1-(5-phospho-beta-D-ribosyl)-5-[(5-phospho-beta-D-ribosylamino)methylideneamino]imidazole-4-carboxamide = 5-[(5-phospho-1-deoxy-D-ribulos-1-ylimino)methylamino]-1-(5-phospho-beta-D-ribosyl)imidazole-4-carboxamide. The protein operates within amino-acid biosynthesis; L-histidine biosynthesis; L-histidine from 5-phospho-alpha-D-ribose 1-diphosphate: step 4/9. The chain is 1-(5-phosphoribosyl)-5-[(5-phosphoribosylamino)methylideneamino] imidazole-4-carboxamide isomerase from Xylella fastidiosa (strain M12).